A 93-amino-acid polypeptide reads, in one-letter code: Large ribosomal subunit protein uL23cy (93 aa).

Belongs to the universal ribosomal protein uL23 family. In terms of assembly, part of the 50S ribosomal subunit.

Its subcellular location is the plastid. It is found in the chloroplast. Its function is as follows. Binds to 23S rRNA. The sequence is that of Large ribosomal subunit protein uL23cy (rpl23-B) from Sorghum bicolor (Sorghum).